The following is a 574-amino-acid chain: Membrane protein insertase YidC (574 aa).

A helical transmembrane segment spans residues 6-26; sequence VFLIFAWLMVAALLWMEWGKD. The interval 45-77 is disordered; it reads RDPDAAAPSAANVPSAQPIPQAGAPGTVPATSS. 5 helical membrane-spanning segments follow: residues 356–376, 380–400, 447–467, 489–509, and 525–545; these read FSIMAIIGQGLFWVLSHLHSF, WGWAIIGLVVLLRLALYPLSA, GGCLPLLIQMPIFFALYWVLV, PYFILPLLNISIMWATQKLTP, and PLVFGVMMAFMPAGLVLYWVV.

It belongs to the OXA1/ALB3/YidC family. Type 1 subfamily. Interacts with the Sec translocase complex via SecD. Specifically interacts with transmembrane segments of nascent integral membrane proteins during membrane integration.

The protein localises to the cell inner membrane. In terms of biological role, required for the insertion and/or proper folding and/or complex formation of integral membrane proteins into the membrane. Involved in integration of membrane proteins that insert both dependently and independently of the Sec translocase complex, as well as at least some lipoproteins. Aids folding of multispanning membrane proteins. The sequence is that of Membrane protein insertase YidC from Xanthomonas euvesicatoria pv. vesicatoria (strain 85-10) (Xanthomonas campestris pv. vesicatoria).